Reading from the N-terminus, the 288-residue chain is Small ribosomal subunit protein uS15m (288 aa).

A mitochondrion-targeting transit peptide spans 1–50 (MRLFEGAFQPWKLASTNLMQQCLLLNKKSQFHTTCILQGLKKQKANQRRK).

This sequence belongs to the universal ribosomal protein uS15 family. Component of the mitochondrial small ribosomal subunit (mt-SSU). Mature yeast 74S mitochondrial ribosomes consist of a small (37S) and a large (54S) subunit. The 37S small subunit contains a 15S ribosomal RNA (15S mt-rRNA) and at least 32 different proteins. The 54S large subunit contains a 21S rRNA (21S mt-rRNA) and at least 45 different proteins.

The protein resides in the mitochondrion. Component of the mitochondrial ribosome (mitoribosome), a dedicated translation machinery responsible for the synthesis of mitochondrial genome-encoded proteins, including at least some of the essential transmembrane subunits of the mitochondrial respiratory chain. The mitoribosomes are attached to the mitochondrial inner membrane and translation products are cotranslationally integrated into the membrane. The sequence is that of Small ribosomal subunit protein uS15m (mrps28) from Schizosaccharomyces pombe (strain 972 / ATCC 24843) (Fission yeast).